The following is a 205-amino-acid chain: Probable thymidylate kinase (205 aa).

Gly7 to Ser14 contacts ATP.

The protein belongs to the thymidylate kinase family.

It catalyses the reaction dTMP + ATP = dTDP + ADP. The polypeptide is Probable thymidylate kinase (Thermococcus onnurineus (strain NA1)).